A 402-amino-acid polypeptide reads, in one-letter code: CinA-like protein (402 aa).

The protein belongs to the CinA family.

The protein is CinA-like protein of Escherichia coli O17:K52:H18 (strain UMN026 / ExPEC).